We begin with the raw amino-acid sequence, 260 residues long: Small ribosomal subunit protein uS2 (260 aa).

Belongs to the universal ribosomal protein uS2 family.

The protein is Small ribosomal subunit protein uS2 of Gluconacetobacter diazotrophicus (strain ATCC 49037 / DSM 5601 / CCUG 37298 / CIP 103539 / LMG 7603 / PAl5).